The following is a 769-amino-acid chain: Cullin-3 (769 aa).

The disordered stretch occupies residues 614–655; that stretch reads DRELPSTTSSTTTTTTTATSSSTSTSPSSSSSSISTPTPSKS. Over residues 618–653 the composition is skewed to low complexity; it reads PSTTSSTTTTTTTATSSSTSTSPSSSSSSISTPTPS. Residues 699–761 form the Cullin neddylation domain; it reads DRKHQIEASI…REYLERSKQD (63 aa). Lysine 713 is covalently cross-linked (Glycyl lysine isopeptide (Lys-Gly) (interchain with G-Cter in NEDD8)).

Belongs to the cullin family. In terms of processing, neddylated. Deneddylated via its interaction with the COP9 signalosome (CSN) complex.

The protein localises to the nucleus. It functions in the pathway protein modification; protein ubiquitination. Its function is as follows. Probable core component of cullin-based SCF-like E3 ubiquitin-protein ligase complexes which mediate the ubiquitination and subsequent proteasomal degradation of target proteins. The E3 ubiquitin-protein ligase activity of the complex is dependent on the neddylation of the cullin subunit. This is Cullin-3 (culC) from Dictyostelium discoideum (Social amoeba).